Here is a 290-residue protein sequence, read N- to C-terminus: 4-hydroxy-tetrahydrodipicolinate synthase (290 aa).

Thr44 is a binding site for pyruvate. Catalysis depends on Tyr132, which acts as the Proton donor/acceptor. The active-site Schiff-base intermediate with substrate is the Lys160. A pyruvate-binding site is contributed by Ile202.

This sequence belongs to the DapA family. As to quaternary structure, homotetramer; dimer of dimers.

It localises to the cytoplasm. It carries out the reaction L-aspartate 4-semialdehyde + pyruvate = (2S,4S)-4-hydroxy-2,3,4,5-tetrahydrodipicolinate + H2O + H(+). It participates in amino-acid biosynthesis; L-lysine biosynthesis via DAP pathway; (S)-tetrahydrodipicolinate from L-aspartate: step 3/4. Functionally, catalyzes the condensation of (S)-aspartate-beta-semialdehyde [(S)-ASA] and pyruvate to 4-hydroxy-tetrahydrodipicolinate (HTPA). The sequence is that of 4-hydroxy-tetrahydrodipicolinate synthase from Geotalea uraniireducens (strain Rf4) (Geobacter uraniireducens).